We begin with the raw amino-acid sequence, 291 residues long: Elongation factor Ts (291 aa).

The interval 82–85 is involved in Mg(2+) ion dislocation from EF-Tu; that stretch reads TDFC.

This sequence belongs to the EF-Ts family.

Its subcellular location is the cytoplasm. Its function is as follows. Associates with the EF-Tu.GDP complex and induces the exchange of GDP to GTP. It remains bound to the aminoacyl-tRNA.EF-Tu.GTP complex up to the GTP hydrolysis stage on the ribosome. This is Elongation factor Ts from Methylobacillus flagellatus (strain ATCC 51484 / DSM 6875 / VKM B-1610 / KT).